Consider the following 217-residue polypeptide: Small ribosomal subunit protein uS3 (217 aa).

The 69-residue stretch at 38–106 (IRKFINKELA…QVHINIIEIK (69 aa)) folds into the KH type-2 domain.

The protein belongs to the universal ribosomal protein uS3 family. As to quaternary structure, part of the 30S ribosomal subunit. Forms a tight complex with proteins S10 and S14.

In terms of biological role, binds the lower part of the 30S subunit head. Binds mRNA in the 70S ribosome, positioning it for translation. This chain is Small ribosomal subunit protein uS3, found in Streptococcus equi subsp. equi (strain 4047).